The sequence spans 383 residues: Alanine racemase (383 aa).

Lys50 acts as the Proton acceptor; specific for D-alanine in catalysis. Lys50 carries the post-translational modification N6-(pyridoxal phosphate)lysine. Residue Arg151 participates in substrate binding. Catalysis depends on Tyr279, which acts as the Proton acceptor; specific for L-alanine. Met327 lines the substrate pocket.

It belongs to the alanine racemase family. Pyridoxal 5'-phosphate serves as cofactor.

It catalyses the reaction L-alanine = D-alanine. It functions in the pathway amino-acid biosynthesis; D-alanine biosynthesis; D-alanine from L-alanine: step 1/1. In terms of biological role, catalyzes the interconversion of L-alanine and D-alanine. May also act on other amino acids. The chain is Alanine racemase (alr) from Chlorobaculum tepidum (strain ATCC 49652 / DSM 12025 / NBRC 103806 / TLS) (Chlorobium tepidum).